A 300-amino-acid chain; its full sequence is uncharacterized protein (300 aa).

This is an uncharacterized protein from Bradyrhizobium diazoefficiens (strain JCM 10833 / BCRC 13528 / IAM 13628 / NBRC 14792 / USDA 110).